Here is a 741-residue protein sequence, read N- to C-terminus: Transcription activator of gluconeogenesis BDBG_05438 (741 aa).

A disordered region spans residues 1–70 (MTASTRNGSP…NAKDPLRPRR (70 aa)). The span at 25–61 (KSMTTTPANPPETKSQTNGKGSGTAQSSQKPASTSAN) shows a compositional bias: polar residues. Positions 77–105 (CFACQRAHLTCGDERPCQRCIKRGLQDAC) form a DNA-binding region, zn(2)-C6 fungal-type. 6 disordered regions span residues 135–163 (QANT…QSVS), 202–239 (SVFH…SVSG), 285–321 (GAGD…NNQS), 401–421 (TNLM…PGLK), 559–590 (GSSL…PHTG), and 655–741 (FHGK…AKRG). Residues 202-226 (SVFHAQSPSSTQNFDLSSNPQTQNL) show a composition bias toward polar residues. Residues 227-238 (SSAMSQTASSVS) show a composition bias toward low complexity. Composition is skewed to polar residues over residues 291–321 (PSDS…NNQS) and 401–416 (TNLM…SRIS). The span at 560-572 (SSLSSASSVRGSS) shows a compositional bias: low complexity. Positions 573 to 586 (TFTPRNNNTHNSID) are enriched in polar residues. Residues 672–718 (TGTTTSGDVATTTATGTSTSNGANANTNGNNTNPNDPSTAASSSASS) show a composition bias toward low complexity. A compositionally biased stretch (basic residues) spans 723–732 (RSNHLGKRGG).

This sequence belongs to the ERT1/acuK family.

It localises to the nucleus. Its function is as follows. Transcription factor which regulates nonfermentable carbon utilization. Activator of gluconeogenetic genes. This chain is Transcription activator of gluconeogenesis BDBG_05438, found in Blastomyces gilchristii (strain SLH14081) (Blastomyces dermatitidis).